The chain runs to 365 residues: DNA replication and repair protein RecF (365 aa).

Gly30–Thr37 is a binding site for ATP.

This sequence belongs to the RecF family.

It localises to the cytoplasm. The RecF protein is involved in DNA metabolism; it is required for DNA replication and normal SOS inducibility. RecF binds preferentially to single-stranded, linear DNA. It also seems to bind ATP. This chain is DNA replication and repair protein RecF, found in Streptococcus pneumoniae serotype 4 (strain ATCC BAA-334 / TIGR4).